We begin with the raw amino-acid sequence, 276 residues long: Glucosamine-6-phosphate deaminase 2 (276 aa).

The Proton acceptor; for enolization step role is filled by aspartate 72. Residues 105 to 130 (HILDGNAADLQAECDAFENKIKEAGG) are a coiled coil. Aspartate 141 functions as the For ring-opening step in the catalytic mechanism. Histidine 143 functions as the Proton acceptor; for ring-opening step in the catalytic mechanism. Catalysis depends on glutamate 148, which acts as the For ring-opening step. Threonine 161 bears the Phosphothreonine mark.

This sequence belongs to the glucosamine/galactosamine-6-phosphate isomerase family. As to quaternary structure, homohexamer. In terms of tissue distribution, ubiquitous, with highest expression detected in testis, ovary, placenta, and heart.

The protein resides in the cytoplasm. It carries out the reaction alpha-D-glucosamine 6-phosphate + H2O = beta-D-fructose 6-phosphate + NH4(+). It participates in nucleotide-sugar biosynthesis; UDP-N-acetyl-alpha-D-glucosamine biosynthesis; alpha-D-glucosamine 6-phosphate from D-fructose 6-phosphate: step 1/1. Allosterically activated by N-acetylglucosamine-6-phosphate (GlcNAc6P). Its function is as follows. Catalyzes the reversible conversion of alpha-D-glucosamine 6-phosphate (GlcN-6P) into beta-D-fructose 6-phosphate (Fru-6P) and ammonium ion, a regulatory reaction step in de novo uridine diphosphate-N-acetyl-alpha-D-glucosamine (UDP-GlcNAc) biosynthesis via hexosamine pathway. Deamination is coupled to aldo-keto isomerization mediating the metabolic flux from UDP-GlcNAc toward Fru-6P. At high ammonium level can drive amination and isomerization of Fru-6P toward hexosamines and UDP-GlcNAc synthesis. Has a role in fine tuning the metabolic fluctuations of cytosolic UDP-GlcNAc and their effects on hyaluronan synthesis that occur during tissue remodeling. The sequence is that of Glucosamine-6-phosphate deaminase 2 from Homo sapiens (Human).